Reading from the N-terminus, the 620-residue chain is Cilia- and flagella-associated protein 52 (620 aa).

WD repeat units lie at residues 62 to 106, 109 to 150, 156 to 195, 288 to 327, 330 to 369, 372 to 411, 415 to 454, 459 to 498, 500 to 541, 543 to 582, and 585 to 620; these read GHGN…LIAR, LHKG…AICG, LNVGNATSVVFSRCRDEMFVTAGNGTIRVWELDLPNRKIW, QLQGGITSITLRGEGHQFFVGTEESHIYRVNFTDFKETLI, CHFEAVQDIVFPFGTAELFATCAKKDIRVWHTMSKRELLR, VPNMTCHGIDFMRDGKSIISAWDDGKIRAFAPESGRLMYT, AHRIGVTAIATTSDCKRIISGGGEGEVRVWQVGCQTQKLE, EHKSSVSCIRVKKNNEECVTASTDGTCIIWDLVRLRRNQM, LANT…RELE, SLSGSINGMDITQEGGHFVTGGHDHLVKVWDYNEGEVTHV, and GHSGNIMAMRISPGNQYIVSVSADGAILRWKYPFAS.

This sequence belongs to the CFAP52 family. As to quaternary structure, microtubule inner protein component of sperm flagellar doublet microtubules. Interacts with BRCA2. Interacts with the CCT chaperonin complex. Interacts with HSP70. Interacts with AK8. Interacts with CFAP45. Interacts with DNAI1. Interacts with IQDC.

Its subcellular location is the cytoplasm. The protein resides in the cytoskeleton. The protein localises to the cilium axoneme. It is found in the flagellum axoneme. Functionally, microtubule inner protein (MIP) part of the dynein-decorated doublet microtubules (DMTs) in cilia axoneme. Important for proper ciliary and flagellar beating. May act in cooperation with CFAP45 and axonemal dynein subunit DNAH11. May play a role in cell growth and/or survival. This Mus musculus (Mouse) protein is Cilia- and flagella-associated protein 52.